The primary structure comprises 149 residues: MLKQAKGRIGRNAVLLALFEEEEEGKITAHLDNLQWRYCKGKVGSMELQKIVASVETAAKRNNVVNGELYREMHALYHAVVEAVQGVTRGQVELGDLMRTVGLRFAVVRGNPYENSKEGEWIAVALYGTIGAPIRGLEHETIGLGINHI.

It belongs to the HutP family. In terms of assembly, homohexamer.

Its function is as follows. Antiterminator that binds to cis-acting regulatory sequences on the mRNA in the presence of histidine, thereby suppressing transcription termination and activating the hut operon for histidine utilization. The sequence is that of Hut operon positive regulatory protein from Geobacillus sp. (strain WCH70).